A 932-amino-acid chain; its full sequence is DNA mismatch repair protein MutS (932 aa).

G615–S622 contributes to the ATP binding site.

Belongs to the DNA mismatch repair MutS family.

In terms of biological role, this protein is involved in the repair of mismatches in DNA. It is possible that it carries out the mismatch recognition step. This protein has a weak ATPase activity. The polypeptide is DNA mismatch repair protein MutS (Clostridium botulinum (strain Kyoto / Type A2)).